The chain runs to 281 residues: Diaminopimelate epimerase (281 aa).

Substrate contacts are provided by N11 and N65. C74 serves as the catalytic Proton donor. Substrate contacts are provided by residues 75–76, N164, N197, and 215–216; these read GN and ER. C224 functions as the Proton acceptor in the catalytic mechanism. 225 to 226 is a substrate binding site; sequence GT.

It belongs to the diaminopimelate epimerase family. In terms of assembly, homodimer.

The protein resides in the cytoplasm. The catalysed reaction is (2S,6S)-2,6-diaminopimelate = meso-2,6-diaminopimelate. It functions in the pathway amino-acid biosynthesis; L-lysine biosynthesis via DAP pathway; DL-2,6-diaminopimelate from LL-2,6-diaminopimelate: step 1/1. Functionally, catalyzes the stereoinversion of LL-2,6-diaminopimelate (L,L-DAP) to meso-diaminopimelate (meso-DAP), a precursor of L-lysine and an essential component of the bacterial peptidoglycan. The chain is Diaminopimelate epimerase from Heliobacterium modesticaldum (strain ATCC 51547 / Ice1).